A 77-amino-acid chain; its full sequence is U10-lycotoxin-Ls1d (77 aa).

A signal peptide spans 1 to 20; sequence MKLIIFTGLFLFAIVSLIEA. Positions 21–26 are excised as a propeptide; sequence EEESGR.

It belongs to the neurotoxin 19 (CSTX) family. 09 (U10-Lctx) subfamily. Post-translationally, contains 4 disulfide bonds. As to expression, expressed by the venom gland.

Its subcellular location is the secreted. In Lycosa singoriensis (Wolf spider), this protein is U10-lycotoxin-Ls1d.